The chain runs to 23 residues: NCPYCVVYCCPPAYCQASGCRPP.

Intrachain disulfides connect C2–C10, C5–C15, and C9–C20. Position 12 is a 4-hydroxyproline; partial (P12).

This sequence belongs to the conotoxin U superfamily. As to expression, expressed by the venom duct.

The protein resides in the secreted. The chain is Conotoxin Tx6.5 from Conus textile (Cloth-of-gold cone).